A 718-amino-acid chain; its full sequence is Methionine--tRNA ligase (718 aa).

Positions 12–22 match the 'HIGH' region motif; the sequence is PYANGDIHLGH. C143, C146, C156, and C159 together coordinate Zn(2+). The 'KMSKS' region motif lies at 349–353; sequence KMSKS. Position 352 (K352) interacts with ATP. The disordered stretch occupies residues 573–599; the sequence is AAPAAKVASSQQRHAEKQQHEAQSAET. One can recognise a tRNA-binding domain in the interval 608–718; sequence DFTKVDLRIA…TGAASGMRVK (111 aa).

Belongs to the class-I aminoacyl-tRNA synthetase family. MetG type 1 subfamily. In terms of assembly, homodimer. Zn(2+) is required as a cofactor.

The protein resides in the cytoplasm. It catalyses the reaction tRNA(Met) + L-methionine + ATP = L-methionyl-tRNA(Met) + AMP + diphosphate. Functionally, is required not only for elongation of protein synthesis but also for the initiation of all mRNA translation through initiator tRNA(fMet) aminoacylation. This is Methionine--tRNA ligase from Aromatoleum aromaticum (strain DSM 19018 / LMG 30748 / EbN1) (Azoarcus sp. (strain EbN1)).